Here is a 141-residue protein sequence, read N- to C-terminus: ATP synthase epsilon chain (141 aa).

This sequence belongs to the ATPase epsilon chain family. F-type ATPases have 2 components, CF(1) - the catalytic core - and CF(0) - the membrane proton channel. CF(1) has five subunits: alpha(3), beta(3), gamma(1), delta(1), epsilon(1). CF(0) has three main subunits: a, b and c.

It localises to the cell membrane. In terms of biological role, produces ATP from ADP in the presence of a proton gradient across the membrane. The polypeptide is ATP synthase epsilon chain (Lactococcus lactis subsp. lactis (strain IL1403) (Streptococcus lactis)).